Here is a 393-residue protein sequence, read N- to C-terminus: NAD(P)H-quinone oxidoreductase subunit H, chloroplastic (393 aa).

The protein belongs to the complex I 49 kDa subunit family. In terms of assembly, NDH is composed of at least 16 different subunits, 5 of which are encoded in the nucleus.

It is found in the plastid. Its subcellular location is the chloroplast thylakoid membrane. The enzyme catalyses a plastoquinone + NADH + (n+1) H(+)(in) = a plastoquinol + NAD(+) + n H(+)(out). It carries out the reaction a plastoquinone + NADPH + (n+1) H(+)(in) = a plastoquinol + NADP(+) + n H(+)(out). NDH shuttles electrons from NAD(P)H:plastoquinone, via FMN and iron-sulfur (Fe-S) centers, to quinones in the photosynthetic chain and possibly in a chloroplast respiratory chain. The immediate electron acceptor for the enzyme in this species is believed to be plastoquinone. Couples the redox reaction to proton translocation, and thus conserves the redox energy in a proton gradient. This chain is NAD(P)H-quinone oxidoreductase subunit H, chloroplastic, found in Solanum bulbocastanum (Wild potato).